A 148-amino-acid polypeptide reads, in one-letter code: MILLKLYLTLAAILCQSRGTTSLDLDDLMTTNPEIQNEIINKHNDLRRTVDPPAKNMLKMSWDNIIAESAKRAALRCNQNEHTPVSGRTIGGVVCGENYFMSSNPRTWSFGIQSWFDERNYFKFGFGPTRAGVMVGHYTQKERCRPEV.

Positions Met1 to Ser22 are cleaved as a signal peptide. Residues Asn41 to Gln140 enclose the SCP domain.

It belongs to the CRISP family. In terms of processing, contains 8 disulfide bonds. In terms of tissue distribution, expressed by the venom gland.

The protein resides in the secreted. Blocks ryanodine receptors, and potassium channels. The polypeptide is Cysteine-rich venom protein VAR6 (Varanus acanthurus (Ridge-tailed monitor)).